Here is a 484-residue protein sequence, read N- to C-terminus: Aldehyde dehydrogenase family 3 member A2 (484 aa).

The Cytoplasmic segment spans residues 1 to 463 (MERQVLRLRQ…FLLKQFNKGR (463 aa)). Residue 185–190 (GNTAVG) participates in NAD(+) binding. Residues Glu207 and Cys241 contribute to the active site. The residue at position 293 (Ser293) is a Phosphoserine. Residues 464 to 484 (LGMLLFVCLVAVAAVIVKDQL) traverse the membrane as a helical segment. Positions 481–484 (KDQL) match the Prevents secretion from ER motif.

The protein belongs to the aldehyde dehydrogenase family. In terms of assembly, homodimer.

The protein localises to the membrane. It localises to the microsome membrane. Its subcellular location is the endoplasmic reticulum membrane. The enzyme catalyses an aldehyde + NAD(+) + H2O = a carboxylate + NADH + 2 H(+). It carries out the reaction a fatty aldehyde + NAD(+) + H2O = a fatty acid + NADH + 2 H(+). It catalyses the reaction hexadecanoate + NADH + 2 H(+) = hexadecanal + NAD(+) + H2O. The catalysed reaction is octanal + NAD(+) + H2O = octanoate + NADH + 2 H(+). The enzyme catalyses (2E)-hexadecenal + NAD(+) + H2O = (E)-hexadec-2-enoate + NADH + 2 H(+). It carries out the reaction 22-oxodocosanoate + NAD(+) + H2O = docosanedioate + NADH + 2 H(+). It catalyses the reaction 2,6,10,14-tetramethylpentadecanal + NAD(+) + H2O = 2,6,10,14-tetramethylpentadecanoate + NADH + 2 H(+). The catalysed reaction is octadecanal + NAD(+) + H2O = octadecanoate + NADH + 2 H(+). The enzyme catalyses dodecanoate + NADH + 2 H(+) = dodecanal + NAD(+) + H2O. It carries out the reaction decanal + NAD(+) + H2O = decanoate + NADH + 2 H(+). It catalyses the reaction tetradecanal + NAD(+) + H2O = tetradecanoate + NADH + 2 H(+). The catalysed reaction is heptanal + NAD(+) + H2O = heptanoate + NADH + 2 H(+). The enzyme catalyses (2E,6E)-farnesal + NAD(+) + H2O = (2E,6E)-farnesoate + NADH + 2 H(+). Its function is as follows. Catalyzes the oxidation of medium and long-chain aliphatic aldehydes to fatty acids. Active on a variety of saturated and unsaturated aliphatic aldehydes between 6 and 24 carbons in length. Responsible for conversion of the sphingosine 1-phosphate (S1P) degradation product hexadecenal to hexadecenoic acid. The protein is Aldehyde dehydrogenase family 3 member A2 (Aldh3a2) of Mus musculus (Mouse).